An 804-amino-acid polypeptide reads, in one-letter code: Tegument protein UL47 homolog (804 aa).

Positions 1 to 15 are enriched in basic residues; it reads MQSGHYNRRQSRRQR. Disordered stretches follow at residues 1-42 and 58-206; these read MQSG…THPP and LNSE…DYFS. Residues 11 to 31 carry the Nuclear localization signal motif; that stretch reads SRRQRISSNTTDSPRHTHGTR. Residues 32–42 show a composition bias toward polar residues; sequence YRSTNWYTHPP. The segment covering 62-72 has biased composition (acidic residues); it reads MDQDSSSDASD. Positions 82–93 are enriched in polar residues; the sequence is STYNGSEQNTST. Residues 94–109 are compositionally biased toward basic and acidic residues; sequence SRHENRIFKLTEREAN. A run of 3 repeats spans residues 117-132, 133-148, and 149-164. The interval 117–203 is 6 X 16 AA approximate tandem repeats; it reads DAIDDEGEAE…IDDEGEAEED (87 aa). Residues 118–204 show a composition bias toward acidic residues; that stretch reads AIDDEGEAEE…DDEGEAEEDY (87 aa). The 1-4; truncated repeat unit spans residues 170 to 180; it reads DAIDDEGEAEE. A 1-5; truncated repeat occupies 181–191; the sequence is DAIDDEGEAEE. One copy of the 1-6; truncated repeat lies at 192 to 203; the sequence is DAIDDEGEAEED. The Nuclear export signal signature appears at 770-792; sequence QPIPSVDLAENLMQYRNEILGLD.

The protein belongs to the alphaherpesvirinae HHV-1 UL47 family. Interacts with US3 kinase. Interacts with ORF24 and ORF27; these interactions seem important for efficient virion nuclear egress. Interacts with ORF17/VHS. Phosphorylated by US3. This phosphorylation is required for proper nuclear localization.

It is found in the virion tegument. The protein resides in the host nucleus. Its subcellular location is the host cytoplasm. In terms of biological role, tegument protein that can bind to various RNA transcripts. Plays a role in the attenuation of selective viral and cellular mRNA degradation by modulating the activity of host shutoff RNase ORF17/VHS. Also plays a role in the primary envelopment of virions in the perinuclear space, probably by interacting with two nuclear egress proteins ORF24 and ORF27. This is Tegument protein UL47 homolog from Varicella-zoster virus (strain Oka vaccine) (HHV-3).